A 223-amino-acid chain; its full sequence is ATP phosphoribosyltransferase (223 aa).

The protein belongs to the ATP phosphoribosyltransferase family. Short subfamily. In terms of assembly, heteromultimer composed of HisG and HisZ subunits.

It localises to the cytoplasm. The enzyme catalyses 1-(5-phospho-beta-D-ribosyl)-ATP + diphosphate = 5-phospho-alpha-D-ribose 1-diphosphate + ATP. Its pathway is amino-acid biosynthesis; L-histidine biosynthesis; L-histidine from 5-phospho-alpha-D-ribose 1-diphosphate: step 1/9. In terms of biological role, catalyzes the condensation of ATP and 5-phosphoribose 1-diphosphate to form N'-(5'-phosphoribosyl)-ATP (PR-ATP). Has a crucial role in the pathway because the rate of histidine biosynthesis seems to be controlled primarily by regulation of HisG enzymatic activity. The protein is ATP phosphoribosyltransferase of Sphingopyxis alaskensis (strain DSM 13593 / LMG 18877 / RB2256) (Sphingomonas alaskensis).